A 344-amino-acid polypeptide reads, in one-letter code: Phenylalanine--tRNA ligase alpha subunit (344 aa).

Residue glutamate 257 coordinates Mg(2+).

This sequence belongs to the class-II aminoacyl-tRNA synthetase family. Phe-tRNA synthetase alpha subunit type 1 subfamily. In terms of assembly, tetramer of two alpha and two beta subunits. Mg(2+) is required as a cofactor.

It is found in the cytoplasm. The catalysed reaction is tRNA(Phe) + L-phenylalanine + ATP = L-phenylalanyl-tRNA(Phe) + AMP + diphosphate + H(+). This is Phenylalanine--tRNA ligase alpha subunit from Chlorobium chlorochromatii (strain CaD3).